The primary structure comprises 1003 residues: Translation initiation factor IF-2 (1003 aa).

Composition is skewed to basic and acidic residues over residues 61 to 74 (EKFSQERQNKDRNK), 139 to 169 (PVVEKVVERKETPQPEKETPKPVVVEEKKPE), 180 to 206 (LEEKKEPKIEKTEEKTPQVKEMEKETP), 219 to 229 (VFKIRPTEFKS), and 252 to 290 (SKEEKRKEREEKDKQRQEQRKLMKDAIIKEIRKGDDKIS). Disordered regions lie at residues 61-81 (EKFSQERQNKDRNKASISIEG) and 135-362 (PKAE…KDRF). Residues 315–350 (NAAGTTNAGGASNNNQRNDNANRPNRNNNSKPNGNN) are compositionally biased toward low complexity. The region spanning 502 to 672 (PRAPIVTVMG…LLEAEMLDLK (171 aa)) is the tr-type G domain. The interval 511–518 (GHVDHGKT) is G1. Position 511 to 518 (511 to 518 (GHVDHGKT)) interacts with GTP. Positions 536 to 540 (GITQH) are G2. Residues 558-561 (DTPG) form a G3 region. GTP contacts are provided by residues 558 to 562 (DTPGH) and 612 to 615 (NKVD). Residues 612–615 (NKVD) are G4. The G5 stretch occupies residues 648–650 (SAK).

It belongs to the TRAFAC class translation factor GTPase superfamily. Classic translation factor GTPase family. IF-2 subfamily.

It is found in the cytoplasm. Functionally, one of the essential components for the initiation of protein synthesis. Protects formylmethionyl-tRNA from spontaneous hydrolysis and promotes its binding to the 30S ribosomal subunits. Also involved in the hydrolysis of GTP during the formation of the 70S ribosomal complex. The protein is Translation initiation factor IF-2 of Phocaeicola vulgatus (strain ATCC 8482 / DSM 1447 / JCM 5826 / CCUG 4940 / NBRC 14291 / NCTC 11154) (Bacteroides vulgatus).